The chain runs to 499 residues: Maturase K (499 aa).

This sequence belongs to the intron maturase 2 family. MatK subfamily.

It is found in the plastid. Its subcellular location is the chloroplast. Usually encoded in the trnK tRNA gene intron. Probably assists in splicing its own and other chloroplast group II introns. The protein is Maturase K of Macrozamia communis (Burrawang palm).